We begin with the raw amino-acid sequence, 276 residues long: Putative pyruvate, phosphate dikinase regulatory protein (276 aa).

Gly152–Thr159 serves as a coordination point for ADP.

The protein belongs to the pyruvate, phosphate/water dikinase regulatory protein family. PDRP subfamily.

The catalysed reaction is N(tele)-phospho-L-histidyl/L-threonyl-[pyruvate, phosphate dikinase] + ADP = N(tele)-phospho-L-histidyl/O-phospho-L-threonyl-[pyruvate, phosphate dikinase] + AMP + H(+). It catalyses the reaction N(tele)-phospho-L-histidyl/O-phospho-L-threonyl-[pyruvate, phosphate dikinase] + phosphate + H(+) = N(tele)-phospho-L-histidyl/L-threonyl-[pyruvate, phosphate dikinase] + diphosphate. In terms of biological role, bifunctional serine/threonine kinase and phosphorylase involved in the regulation of the pyruvate, phosphate dikinase (PPDK) by catalyzing its phosphorylation/dephosphorylation. The polypeptide is Putative pyruvate, phosphate dikinase regulatory protein (Staphylococcus carnosus (strain TM300)).